The sequence spans 588 residues: Ankyrin repeat and SOCS box protein 15 (588 aa).

ANK repeat units follow at residues 75–104, 110–139, 143–172, 176–205, 209–238, 242–271, 275–304, 307–336, 349–378, 379–408, and 416–444; these read KGWF…KTLW, DGET…WPNT, KGET…SLDQ, KRWS…NVHL, FGVT…DVLA, DGAS…SGNI, AGHL…KHAI, SGLT…DVNS, ERKT…DPNL, DPLN…NVNC, and TRFP…QVEM. The SOCS box domain occupies 524–579; sequence WPEIRQILENPCSLKHLCRLKIRRLMGLQRLCQPTLMEKLSLPPTIQRYILFKEYD.

This sequence belongs to the ankyrin SOCS box (ASB) family.

It functions in the pathway protein modification; protein ubiquitination. Functionally, may be a substrate-recognition component of a SCF-like ECS (Elongin-Cullin-SOCS-box protein) E3 ubiquitin-protein ligase complex which mediates the ubiquitination and subsequent proteasomal degradation of target proteins. The chain is Ankyrin repeat and SOCS box protein 15 (ASB15) from Bos taurus (Bovine).